Reading from the N-terminus, the 225-residue chain is Uridylate kinase (225 aa).

An ATP-binding site is contributed by 9–10 (GS). Position 44 (G44) interacts with UMP. G45 and R49 together coordinate ATP. UMP contacts are provided by residues D66 and 114–120 (THPGHTT). Residues T140, N141, Y146, and D149 each contribute to the ATP site.

This sequence belongs to the UMP kinase family. Homohexamer.

The protein localises to the cytoplasm. It carries out the reaction UMP + ATP = UDP + ADP. It participates in pyrimidine metabolism; CTP biosynthesis via de novo pathway; UDP from UMP (UMPK route): step 1/1. With respect to regulation, inhibited by UTP. In terms of biological role, catalyzes the reversible phosphorylation of UMP to UDP. This is Uridylate kinase from Pyrococcus abyssi (strain GE5 / Orsay).